The primary structure comprises 53 residues: UPF0391 membrane protein azo1750 (53 aa).

2 consecutive transmembrane segments (helical) span residues 6-26 and 30-50; these read VIFL…IAAG and IAKI…VLGM.

It belongs to the UPF0391 family.

Its subcellular location is the cell membrane. In Azoarcus sp. (strain BH72), this protein is UPF0391 membrane protein azo1750.